The chain runs to 77 residues: uncharacterized protein (77 aa).

This is an uncharacterized protein from Salmonella typhimurium (strain LT2 / SGSC1412 / ATCC 700720).